The chain runs to 124 residues: UPF0235 protein (124 aa).

Residues 1–22 form a disordered region; it reads MTKKGSSNSSKQQQQQQQIIIN.

Belongs to the UPF0235 family.

This is UPF0235 protein from Dictyostelium discoideum (Social amoeba).